Here is a 746-residue protein sequence, read N- to C-terminus: GTPase-activating protein GYP7 (746 aa).

Phosphoserine occurs at positions 265 and 339. The Rab-GAP TBC domain occupies 385-633; sequence LENDSLRGKV…HIWENFWTFY (249 aa). The tract at residues 470-505 is disordered; that stretch reads TIDGLPPPPQQLPANENNSTSPESANDESDDADDGV. Residues 481–491 are compositionally biased toward polar residues; the sequence is LPANENNSTSP.

The protein localises to the cytoplasm. Functionally, GTPase-activating protein (GAP) that most effectively accelerates the intrinsic GTPase activity of Ypt/Rab-type GTPase YPT7 involved in vacuole docking and fusion. It is also active, but to a lesser extent, on YPT31, YPT32, YPT1, YPT6 and SEC4. Provides a catalytic arginine (arginine finger) in trans to accelerate the GTP hydrolysis rate of the substrate GTPase. The protein is GTPase-activating protein GYP7 (GYP7) of Saccharomyces cerevisiae (strain ATCC 204508 / S288c) (Baker's yeast).